Reading from the N-terminus, the 2096-residue chain is HEAT repeat-containing protein 1 homolog (2096 aa).

An HEAT repeat occupies 2058–2096; that stretch reads TVPFIAELLEDEHQRVEKNTRTGVQELETILGESVQKYL.

This sequence belongs to the HEATR1/UTP10 family. As to quaternary structure, part of the small subunit (SSU) processome, composed of more than 70 proteins and the RNA chaperone small nucleolar RNA (snoRNA) U3. Interacts with MYC; the interaction is required for localization of MYC to the nucleolus.

The protein resides in the nucleus. It is found in the nucleolus. Ribosome biogenesis factor; required for recruitment of Myc to nucleoli. Involved in nucleolar processing of pre-18S ribosomal RNA. Required for optimal pre-ribosomal RNA transcription by RNA polymerase I. Part of the small subunit (SSU) processome, first precursor of the small eukaryotic ribosomal subunit. During the assembly of the SSU processome in the nucleolus, many ribosome biogenesis factors, an RNA chaperone and ribosomal proteins associate with the nascent pre-rRNA and work in concert to generate RNA folding, modifications, rearrangements and cleavage as well as targeted degradation of pre-ribosomal RNA by the RNA exosome. Involved in neuronal-lineage cell proliferation during larval development. The chain is HEAT repeat-containing protein 1 homolog from Drosophila melanogaster (Fruit fly).